Reading from the N-terminus, the 573-residue chain is 2-succinyl-5-enolpyruvyl-6-hydroxy-3-cyclohexene-1-carboxylate synthase (573 aa).

The protein belongs to the TPP enzyme family. MenD subfamily. As to quaternary structure, homodimer. The cofactor is Mg(2+). It depends on Mn(2+) as a cofactor. Thiamine diphosphate serves as cofactor.

The catalysed reaction is isochorismate + 2-oxoglutarate + H(+) = 5-enolpyruvoyl-6-hydroxy-2-succinyl-cyclohex-3-ene-1-carboxylate + CO2. It functions in the pathway quinol/quinone metabolism; 1,4-dihydroxy-2-naphthoate biosynthesis; 1,4-dihydroxy-2-naphthoate from chorismate: step 2/7. The protein operates within quinol/quinone metabolism; menaquinone biosynthesis. In terms of biological role, catalyzes the thiamine diphosphate-dependent decarboxylation of 2-oxoglutarate and the subsequent addition of the resulting succinic semialdehyde-thiamine pyrophosphate anion to isochorismate to yield 2-succinyl-5-enolpyruvyl-6-hydroxy-3-cyclohexene-1-carboxylate (SEPHCHC). The chain is 2-succinyl-5-enolpyruvyl-6-hydroxy-3-cyclohexene-1-carboxylate synthase from Shewanella putrefaciens (strain CN-32 / ATCC BAA-453).